The primary structure comprises 1300 residues: Serine protease EspP (1300 aa).

Positions 1 to 55 (MNKIYSLKYSHITGGLIAVSELSGRVSSRATGKKKHKRILALCFLGLLQSSYSFA) are cleaved as a signal peptide. Residues 57–311 (QMDISNFYIR…NQTTIDNLKN (255 aa)) form the Peptidase S6 domain. Residues His-127, Asp-156, and Ser-263 each act as charge relay system in the active site. One can recognise an Autotransporter domain in the interval 1034–1300 (DINGEAGAWA…AVNANFRYSF (267 aa)).

Cleaved to release the mature protein from the outer membrane.

The protein localises to the periplasm. It localises to the secreted. It is found in the cell surface. The protein resides in the cell outer membrane. Inhibition of cytotoxic activity by phenylmethylsulfonyl fluoride. Its function is as follows. Serine protease capable of cleaving pepsin A and human coagulation factor V, which may contribute to the mucosal hemorrhage observed in hemorrhagic colitis. In Escherichia coli O157:H7, this protein is Serine protease EspP (espP).